A 78-amino-acid chain; its full sequence is Short neurotoxin OH-5 (78 aa).

Residues 1 to 21 form the signal peptide; the sequence is MKNLLLTFLVVTIVCLDLGYT. Intrachain disulfides connect cysteine 24-cysteine 40, cysteine 33-cysteine 58, cysteine 62-cysteine 70, and cysteine 71-cysteine 76.

It belongs to the three-finger toxin family. Short-chain subfamily. In terms of tissue distribution, expressed by the venom gland.

It is found in the secreted. Functionally, this three-finger toxin binds and inhibits the nicotinic acetylcholine receptor (nAChR). In Ophiophagus hannah (King cobra), this protein is Short neurotoxin OH-5.